Consider the following 142-residue polypeptide: Large ribosomal subunit protein uL13 (142 aa).

Belongs to the universal ribosomal protein uL13 family. In terms of assembly, part of the 50S ribosomal subunit.

Its function is as follows. This protein is one of the early assembly proteins of the 50S ribosomal subunit, although it is not seen to bind rRNA by itself. It is important during the early stages of 50S assembly. The chain is Large ribosomal subunit protein uL13 from Psychromonas ingrahamii (strain DSM 17664 / CCUG 51855 / 37).